The primary structure comprises 98 residues: uncharacterized protein (98 aa).

A helical transmembrane segment spans residues 10–30 (LYGFFAVTGVLIASFIIGEIV).

The protein resides in the host membrane. This is an uncharacterized protein from Saccharolobus islandicus (Sulfolobus islandicus).